The following is a 132-amino-acid chain: Dormancy-associated protein 1 (132 aa).

The tract at residues 53-76 (MPAAVSPGTPTTPTTPTTPRKDNV) is disordered. Low complexity predominate over residues 61–70 (TPTTPTTPTT). Thr-64 is subject to Phosphothreonine.

It belongs to the DRM1/ARP family. As to expression, isoform 1: Expressed mainly in the low bolt. Isoform 2: Expressed mainly in the low bolt. Detected in flowers. Isoform 4: Expressed mainly in the low bolt. Isoform 5: Expressed mainly in the 6 days old seedlings. Detected in 16 days old seedlings, axil, low bolt and floral samples, but only barely in leaves and top bolt.

This Arabidopsis thaliana (Mouse-ear cress) protein is Dormancy-associated protein 1.